The following is a 133-amino-acid chain: U-scoloptoxin(05)-Sa1a (133 aa).

Positions 1–24 are cleaved as a signal peptide; the sequence is MPSLCIIALFGTLTFYTLIPSIHT.

It belongs to the scoloptoxin-05 family. In terms of processing, contains 5 disulfide bonds. In terms of tissue distribution, expressed by the venom gland.

It is found in the secreted. This chain is U-scoloptoxin(05)-Sa1a, found in Scolopendra alternans (Florida Keys giant centipede).